Reading from the N-terminus, the 107-residue chain is Nucleoid-associated protein Pnuc_0701 (107 aa).

Belongs to the YbaB/EbfC family. Homodimer.

It is found in the cytoplasm. Its subcellular location is the nucleoid. Binds to DNA and alters its conformation. May be involved in regulation of gene expression, nucleoid organization and DNA protection. The protein is Nucleoid-associated protein Pnuc_0701 of Polynucleobacter asymbioticus (strain DSM 18221 / CIP 109841 / QLW-P1DMWA-1) (Polynucleobacter necessarius subsp. asymbioticus).